The primary structure comprises 305 residues: UDP-3-O-acyl-N-acetylglucosamine deacetylase (305 aa).

Residues His-78, His-237, and Asp-241 each coordinate Zn(2+). Residue His-264 is the Proton donor of the active site.

Belongs to the LpxC family. Zn(2+) is required as a cofactor.

It carries out the reaction a UDP-3-O-[(3R)-3-hydroxyacyl]-N-acetyl-alpha-D-glucosamine + H2O = a UDP-3-O-[(3R)-3-hydroxyacyl]-alpha-D-glucosamine + acetate. It participates in glycolipid biosynthesis; lipid IV(A) biosynthesis; lipid IV(A) from (3R)-3-hydroxytetradecanoyl-[acyl-carrier-protein] and UDP-N-acetyl-alpha-D-glucosamine: step 2/6. In terms of biological role, catalyzes the hydrolysis of UDP-3-O-myristoyl-N-acetylglucosamine to form UDP-3-O-myristoylglucosamine and acetate, the committed step in lipid A biosynthesis. The chain is UDP-3-O-acyl-N-acetylglucosamine deacetylase from Burkholderia thailandensis (strain ATCC 700388 / DSM 13276 / CCUG 48851 / CIP 106301 / E264).